A 369-amino-acid polypeptide reads, in one-letter code: Serine/threonine-protein acetyltransferase HopZ1a (369 aa).

The disordered stretch occupies residues 1-46 (MGNVCVGGSRMSHQVYSPDRADTPPRSERNTPDRRQRAAGDAERTQ). Residues 19-46 (DRADTPPRSERNTPDRRQRAAGDAERTQ) show a composition bias toward basic and acidic residues. Arg49, Lys53, and Arg106 together coordinate 1D-myo-inositol hexakisphosphate. Residues His150 and Glu170 contribute to the active site. His150 provides a ligand contact to CoA. Residues Ala177 and 211–212 (KT) each bind CoA. Residue Cys216 is part of the active site. 1D-myo-inositol hexakisphosphate is bound by residues Asn222, 226-229 (KAHK), and 289-290 (KH). Lys289 bears the N6-acetyllysine; by autocatalysis mark. Position 292-295 (292-295 (ASLT)) interacts with CoA. Residues 314–317 (SEGH) and Arg326 contribute to the 1D-myo-inositol hexakisphosphate site. CoA is bound by residues 331 to 334 (RVKR) and 344 to 348 (SNTQF). Residues Gln358 and Arg362 each coordinate 1D-myo-inositol hexakisphosphate.

Belongs to the acetyltransferase YopJ family. Interacts with host plant JAZ proteins (e.g. Glycine max JAZ1 and Arabidospis thaliana TIFY10B/JAZ2, TIFY11A/JAZ5, TIFY11B/JAZ6, TIFY5A/JAZ8 and TIFY3B/JAZ12) and triggers their degradation. Binds directly to SZE1 and SZE2 at the host plasma membrane; this interaction with a complex made of, at least, SZE1, BKN2/SZE2, ZAR1 and ZED1 triggers host immunity. 1D-myo-inositol hexakisphosphate is required as a cofactor. Post-translationally, autoacetylated at Lys-289; while autoacetylation at Lys-289 is required for virulence function to some extent, it is not essential.

It localises to the secreted. Its subcellular location is the host cell membrane. It is found in the host cytoplasm. The protein resides in the host cytoskeleton. The protein localises to the host nucleus. The catalysed reaction is L-threonyl-[protein] + acetyl-CoA = O-acetyl-L-threonyl-[protein] + CoA. The enzyme catalyses L-seryl-[protein] + acetyl-CoA = O-acetyl-L-seryl-[protein] + CoA. It carries out the reaction L-lysyl-[protein] + acetyl-CoA = N(6)-acetyl-L-lysyl-[protein] + CoA + H(+). 1D-myo-inositol hexakisphosphate activates protein-acetyltransferase activity via an allosteric mechanism: 1D-myo-inositol hexakisphosphate-binding induces a conformational rearrangement that stimulates the interaction with acetyl-CoA. Acetyltransferase activity is activated by phytic acid. Functionally, serine/threonine-protein acetyltransferase translocated into infected cells, which impairs host microtubule network and host immunity by mediating acetylation of target proteins. Blocks secretion in host cells by mediating acetylation of host tubulin, thereby impairing host microbubule network. Impairs host cell immunity by mediating acetylation of host TIFY/JAZ transcription repressors (Arabidopsis thaliana TIFY10B/JAZ2, TIFY11A/JAZ5, TIFY11B/JAZ6, TIFY5A/JAZ8, TIFY9/JAZ10 and TIFY3B/JAZ12), thereby activating host jasmonate signaling. The polypeptide is Serine/threonine-protein acetyltransferase HopZ1a (Pseudomonas syringae pv. syringae).